The primary structure comprises 445 residues: Phosphoglucosamine mutase (445 aa).

The Phosphoserine intermediate role is filled by S99. The Mg(2+) site is built by S99, D242, D244, and D246. S99 is modified (phosphoserine).

This sequence belongs to the phosphohexose mutase family. The cofactor is Mg(2+). Activated by phosphorylation.

The enzyme catalyses alpha-D-glucosamine 1-phosphate = D-glucosamine 6-phosphate. Its function is as follows. Catalyzes the conversion of glucosamine-6-phosphate to glucosamine-1-phosphate. The sequence is that of Phosphoglucosamine mutase from Sulfurovum sp. (strain NBC37-1).